We begin with the raw amino-acid sequence, 588 residues long: Outer membrane transporter CdiB (588 aa).

The helical transmembrane segment at Val33 to Leu55 threads the bilayer. A POTRA domain is found at Phe104–Gly179.

This sequence belongs to the TPS (TC 1.B.20) family.

It is found in the cell outer membrane. Its function is as follows. Potential outer membrane protein component of a toxin-immunity protein module, which functions as a cellular contact-dependent growth inhibition (CDI) system. CDI modules allow bacteria to communicate with and inhibit the growth of closely related neighboring bacteria in a contact-dependent fashion. This protein may be required for secretion and assembly of the CdiA toxin protein. Functionally, probable member of a two partner secretion pathway (TPS) in which it mediates the secretion of CdiA. This chain is Outer membrane transporter CdiB, found in Escherichia coli O6:K15:H31 (strain 536 / UPEC).